Consider the following 479-residue polypeptide: UDP-N-acetylmuramate--L-alanine ligase (479 aa).

Position 127–133 (127–133 (GTHGKTT)) interacts with ATP.

Belongs to the MurCDEF family.

The protein localises to the cytoplasm. The enzyme catalyses UDP-N-acetyl-alpha-D-muramate + L-alanine + ATP = UDP-N-acetyl-alpha-D-muramoyl-L-alanine + ADP + phosphate + H(+). It functions in the pathway cell wall biogenesis; peptidoglycan biosynthesis. Cell wall formation. The protein is UDP-N-acetylmuramate--L-alanine ligase of Shewanella denitrificans (strain OS217 / ATCC BAA-1090 / DSM 15013).